The chain runs to 379 residues: Mannitol-1-phosphate 5-dehydrogenase (379 aa).

Position 3 to 14 (3 to 14) interacts with NAD(+); that stretch reads ALHFGAGNIGRG.

This sequence belongs to the mannitol dehydrogenase family.

The catalysed reaction is D-mannitol 1-phosphate + NAD(+) = beta-D-fructose 6-phosphate + NADH + H(+). In Actinobacillus pleuropneumoniae serotype 3 (strain JL03), this protein is Mannitol-1-phosphate 5-dehydrogenase.